The chain runs to 345 residues: Anthranilate phosphoribosyltransferase (345 aa).

Residues Gly-81, 84 to 85, Ser-89, 91 to 94, 109 to 117, and Ala-121 each bind 5-phospho-alpha-D-ribose 1-diphosphate; these read GD, NVST, and KHGNRAATS. Gly-81 is an anthranilate binding site. Mg(2+) is bound at residue Ser-93. Asn-112 is a binding site for anthranilate. Arg-167 is a binding site for anthranilate. 2 residues coordinate Mg(2+): Asp-226 and Glu-227.

The protein belongs to the anthranilate phosphoribosyltransferase family. In terms of assembly, homodimer. It depends on Mg(2+) as a cofactor.

It catalyses the reaction N-(5-phospho-beta-D-ribosyl)anthranilate + diphosphate = 5-phospho-alpha-D-ribose 1-diphosphate + anthranilate. The protein operates within amino-acid biosynthesis; L-tryptophan biosynthesis; L-tryptophan from chorismate: step 2/5. Catalyzes the transfer of the phosphoribosyl group of 5-phosphorylribose-1-pyrophosphate (PRPP) to anthranilate to yield N-(5'-phosphoribosyl)-anthranilate (PRA). The protein is Anthranilate phosphoribosyltransferase of Methylobacterium radiotolerans (strain ATCC 27329 / DSM 1819 / JCM 2831 / NBRC 15690 / NCIMB 10815 / 0-1).